Here is an 88-residue protein sequence, read N- to C-terminus: Large ribosomal subunit protein bL31B (88 aa).

Belongs to the bacterial ribosomal protein bL31 family. Type B subfamily. As to quaternary structure, part of the 50S ribosomal subunit.

The sequence is that of Large ribosomal subunit protein bL31B from Glaesserella parasuis serovar 5 (strain SH0165) (Haemophilus parasuis).